The primary structure comprises 349 residues: Flagellar P-ring protein (349 aa).

Positions 1–16 (MKYFFIIALLLSSLYS) are cleaved as a signal peptide.

It belongs to the FlgI family. The basal body constitutes a major portion of the flagellar organelle and consists of four rings (L,P,S, and M) mounted on a central rod.

The protein resides in the periplasm. It is found in the bacterial flagellum basal body. Assembles around the rod to form the L-ring and probably protects the motor/basal body from shearing forces during rotation. This chain is Flagellar P-ring protein, found in Aliarcobacter butzleri (strain RM4018) (Arcobacter butzleri).